A 980-amino-acid polypeptide reads, in one-letter code: Putative helicase 087L (980 aa).

Residues 59-246 enclose the Helicase ATP-binding domain; that stretch reads INPHTLYDGV…IDLFNLILRT (188 aa). Residue 72 to 79 participates in ATP binding; sequence HEMGTGKT. Positions 189–192 match the DEAH box motif; the sequence is DEAH. In terms of domain architecture, Helicase C-terminal spans 389–546; that stretch reads RLSFVFSEFV…SIDLHMYEIA (158 aa).

Belongs to the IIV-6 022L family. SNF2/RAD54 helicase subfamily.

The protein is Putative helicase 087L of Invertebrate iridescent virus 3 (IIV-3).